Consider the following 509-residue polypeptide: Maturase K (509 aa).

The protein belongs to the intron maturase 2 family. MatK subfamily.

The protein resides in the plastid. The protein localises to the chloroplast. Functionally, usually encoded in the trnK tRNA gene intron. Probably assists in splicing its own and other chloroplast group II introns. This Abies firma (Momi fir) protein is Maturase K.